Here is a 434-residue protein sequence, read N- to C-terminus: Angio-associated migratory cell protein (434 aa).

The segment at 1-63 (MESESESGAA…EEEEEEGNEE (63 aa)) is disordered. S20 bears the Phosphoserine mark. Residues 39–62 (DPDDLAQEMEDVDFEEEEEEEGNE) are compositionally biased toward acidic residues. WD repeat units follow at residues 89–129 (LHSA…LLFE), 132–171 (GHKDSVTCAGFSHDSTLVATGDMSGLLKVWQVDTKEEVWS), 173–212 (EAGDLEWMEWHPRAPVLLAGTADGNTWMWKVPNGDCKTFQ), 214–254 (PNCP…HVLK), 258–299 (GHQG…GVFR), 315–354 (SESNSVESLGFCSVMPLAAVGYLDGTLAIYDLATQTLRHQ), 356–395 (QHQSGIVQLLWEAGTAVVYTCSLDGIVRLWDARTGRLLTD), and 398–433 (GHTAEILDFALSKDASLVVTTSGDHKAKVFCVQRPD).

The protein resides in the cell membrane. The protein localises to the cytoplasm. Its function is as follows. Plays a role in angiogenesis and cell migration. In smooth muscle cell migration, may act through the RhoA pathway. This is Angio-associated migratory cell protein (AAMP) from Pongo abelii (Sumatran orangutan).